A 758-amino-acid chain; its full sequence is MTILNHTLGFPRVGLKRELKKAQESYWAGNSTQEELLNVGRELRARHWQQQQQAGVDLVPVGDFAWYDHVLTTSLLLGNVPERHQNADGSIDLDTLFRIGRGRAPTGTPAAAAEMTKWFNTNYHYMVPEFQQGQQFKLGWTQLLDEVDEALALGHKIKPVLLGPVTYLWLGKVKGEQFDRLSLLKDILPVYQQVLGELAKRGIEWVQIDEPALVLELPPEWLDAYQPAYQALQGQVKLLLTTYFDSIGHNLDTIRALPVQGLHVDVVAGQDDIAKLNAKLPQEWLLSLGVINGRNVWRADLSHWFERLQPLVNSRPLWLGSSCSLLHSPIDLSEETRLDAEVKSWFAFALQKCAELALLTQALNAPSEAKLAELAAYSAPIRARRASSRVHNPQVEQRLAAITAQDIERQQPYEARAAAQRKRFNLPAWPTTTIGSFPQTTEIRGLRLDFKQGRLDGKNYRTGISEHIKQAIAEQERLGLDVLVHGEAERNDMVEYFGEHLDGFVFTQNGWVQSYGSRCVKPPVIIGDISRPEAITVEWAKYAQSLTDKPVKGMLTGPVTILCWSFPREDVSRETIAKQIALALRDEVEDLEKAGIGIIQIDEPALREGLPLRRADWQAYLQWAVDAFKLNAAVAQNDTQIHTHMCYCEFNDIMDSIAALDADVITIETSRSDMELLESFEDFAYPNEIGPGVYDIHSPNVPSVEWIEALLRKAAQRIPAERLWVNPDCGLKTRGWPETRQALANMVLAAQRLREEQV.

5-methyltetrahydropteroyltri-L-glutamate is bound by residues 17–20 (RELK) and Lys-117. L-homocysteine is bound by residues 434–436 (IGS) and Glu-487. Residues 434-436 (IGS) and Glu-487 each bind L-methionine. Residues 518–519 (RC) and Trp-564 contribute to the 5-methyltetrahydropteroyltri-L-glutamate site. Residue Asp-602 coordinates L-homocysteine. L-methionine is bound at residue Asp-602. Glu-608 provides a ligand contact to 5-methyltetrahydropteroyltri-L-glutamate. Residues His-644, Cys-646, and Glu-668 each contribute to the Zn(2+) site. The active-site Proton donor is the His-697. A Zn(2+)-binding site is contributed by Cys-729.

It belongs to the vitamin-B12 independent methionine synthase family. The cofactor is Zn(2+).

The enzyme catalyses 5-methyltetrahydropteroyltri-L-glutamate + L-homocysteine = tetrahydropteroyltri-L-glutamate + L-methionine. It functions in the pathway amino-acid biosynthesis; L-methionine biosynthesis via de novo pathway; L-methionine from L-homocysteine (MetE route): step 1/1. Functionally, catalyzes the transfer of a methyl group from 5-methyltetrahydrofolate to homocysteine resulting in methionine formation. This Yersinia enterocolitica serotype O:8 / biotype 1B (strain NCTC 13174 / 8081) protein is 5-methyltetrahydropteroyltriglutamate--homocysteine methyltransferase.